A 404-amino-acid polypeptide reads, in one-letter code: F-box only protein 12 (404 aa).

The region spanning 1–44 (MKNSIPIDLIYEILSRLPAKSVARCRCVSKRWRSILRHQVFTEL) is the F-box domain. A helical membrane pass occupies residues 383–403 (LAILFCLFFLLFNYLIRLCWV).

It is found in the membrane. The sequence is that of F-box only protein 12 (FBX12) from Arabidopsis thaliana (Mouse-ear cress).